Here is a 57-residue protein sequence, read N- to C-terminus: Potassium channel toxin alpha-KTx 8.7 (57 aa).

The N-terminal stretch at 1 to 28 is a signal peptide; that stretch reads MSRLYAIILIALVFNVIMTIMPDMKVEA. Disulfide bonds link Cys-31–Cys-47, Cys-34–Cys-52, and Cys-38–Cys-54.

Expressed by the venom gland.

It localises to the secreted. In terms of biological role, inhibits voltage-gated potassium channel rKv1.1/KCNA1 at nanomolar ranges (IC(50)=8.5 nM). This Mesobuthus eupeus (Lesser Asian scorpion) protein is Potassium channel toxin alpha-KTx 8.7.